A 154-amino-acid chain; its full sequence is SsrA-binding protein (154 aa).

It belongs to the SmpB family.

Its subcellular location is the cytoplasm. Required for rescue of stalled ribosomes mediated by trans-translation. Binds to transfer-messenger RNA (tmRNA), required for stable association of tmRNA with ribosomes. tmRNA and SmpB together mimic tRNA shape, replacing the anticodon stem-loop with SmpB. tmRNA is encoded by the ssrA gene; the 2 termini fold to resemble tRNA(Ala) and it encodes a 'tag peptide', a short internal open reading frame. During trans-translation Ala-aminoacylated tmRNA acts like a tRNA, entering the A-site of stalled ribosomes, displacing the stalled mRNA. The ribosome then switches to translate the ORF on the tmRNA; the nascent peptide is terminated with the 'tag peptide' encoded by the tmRNA and targeted for degradation. The ribosome is freed to recommence translation, which seems to be the essential function of trans-translation. In Staphylococcus aureus (strain USA300), this protein is SsrA-binding protein.